The sequence spans 314 residues: Porphobilinogen deaminase (314 aa).

Cys249 is subject to S-(dipyrrolylmethanemethyl)cysteine.

This sequence belongs to the HMBS family. As to quaternary structure, monomer. It depends on dipyrromethane as a cofactor.

It carries out the reaction 4 porphobilinogen + H2O = hydroxymethylbilane + 4 NH4(+). The protein operates within porphyrin-containing compound metabolism; protoporphyrin-IX biosynthesis; coproporphyrinogen-III from 5-aminolevulinate: step 2/4. Its function is as follows. Tetrapolymerization of the monopyrrole PBG into the hydroxymethylbilane pre-uroporphyrinogen in several discrete steps. The sequence is that of Porphobilinogen deaminase from Brucella suis biovar 1 (strain 1330).